We begin with the raw amino-acid sequence, 207 residues long: Thymidylate kinase (207 aa).

ATP is bound at residue 7–14; it reads GCEGSGKS.

Belongs to the thymidylate kinase family.

It catalyses the reaction dTMP + ATP = dTDP + ADP. Phosphorylation of dTMP to form dTDP in both de novo and salvage pathways of dTTP synthesis. The polypeptide is Thymidylate kinase (Chlamydia caviae (strain ATCC VR-813 / DSM 19441 / 03DC25 / GPIC) (Chlamydophila caviae)).